The primary structure comprises 339 residues: Methionyl-tRNA formyltransferase (339 aa).

110 to 113 (SLLP) lines the (6S)-5,6,7,8-tetrahydrofolate pocket.

The protein belongs to the Fmt family.

It carries out the reaction L-methionyl-tRNA(fMet) + (6R)-10-formyltetrahydrofolate = N-formyl-L-methionyl-tRNA(fMet) + (6S)-5,6,7,8-tetrahydrofolate + H(+). Functionally, attaches a formyl group to the free amino group of methionyl-tRNA(fMet). The formyl group appears to play a dual role in the initiator identity of N-formylmethionyl-tRNA by promoting its recognition by IF2 and preventing the misappropriation of this tRNA by the elongation apparatus. This is Methionyl-tRNA formyltransferase from Prochlorococcus marinus (strain SARG / CCMP1375 / SS120).